The following is a 370-amino-acid chain: Leucine-rich repeat and transmembrane domain-containing protein 2 (370 aa).

The signal sequence occupies residues 1–35 (MLAPGSSPGQRGRLALQWRQVSWITCWIALYAVEA). Positions 36–68 (LPTCPFSCKCDSRSLEVDCSGLGLTTVPPDVPA) constitute an LRRNT domain. The Extracellular portion of the chain corresponds to 36–310 (LPTCPFSCKC…PASVRRAMGT (275 aa)). 5 LRR repeats span residues 69–90 (ATRTLLLLNNKLSALPSWAFAN), 93–114 (SLQRLDLSNNFLDRLPRSIFGD), 117–139 (NLTELQLRNNSIRTLDRDLLRHS), 141–162 (LLRHLDLSINGLAQLPPGLFDG), and 165–186 (ALRSLSLRSNRLQNLDRLTFEP). N90 carries N-linked (GlcNAc...) asparagine glycosylation. N-linked (GlcNAc...) asparagine glycosylation is found at N117 and N125. The LRRCT domain maps to 198 to 252 (NPWECDCNLREFKHWMEWFSYRGGRLDQLACTLPKELRGKDMRMVPMEMFNYCSQ). The N-linked (GlcNAc...) asparagine glycan is linked to N257. Positions 261–300 (GLDIPGPPCTKASPEPAKPKPGAEPEPEPSTACPQKQRHR) are disordered. The chain crosses the membrane as a helical span at residues 311 to 331 (VIIAGVVCGVVCIMMVVAAAY). Topologically, residues 332–370 (GCIYASLMAKYHRELKKRQPLMGDPEGEHEDQKQISSVA) are cytoplasmic. Residues 351-370 (PLMGDPEGEHEDQKQISSVA) are disordered.

The protein resides in the membrane. The chain is Leucine-rich repeat and transmembrane domain-containing protein 2 (LRTM2) from Homo sapiens (Human).